The primary structure comprises 799 residues: Serine/threonine-protein kinase AfsK (799 aa).

A Protein kinase domain is found at 16-271; it reads FEVLGRLGAG…QAQLAPHLFG (256 aa). ATP-binding positions include 22–30 and Lys-44; that span reads LGAGGMGLV. Phosphoserine; by autocatalysis is present on Ser-71. Asp-138 serves as the catalytic Proton acceptor. Thr-168 is subject to Phosphothreonine; by autocatalysis. Disordered regions lie at residues 295 to 343 and 393 to 426; these read RRNG…PAPP and LAASWSRPRPGVNGADPAVPAPAPAPPEASPAGW. 2 stretches are compositionally biased toward pro residues: residues 325–343 and 411–421; these read HAPPLPPPPAHDPVVPAPP and VPAPAPAPPEA.

It belongs to the protein kinase superfamily. Ser/Thr protein kinase family. In terms of assembly, interacts (via the N-terminal kinase domain) with KbpA; the interaction prevents autophosphorylation of AfsK. Post-translationally, autophosphorylated mainly on threonine residues. Some phosphorylation on serine residues. Autophosphorylation on Thr-168 is the major site enhancing kinase activity towards AfsR, and is regulated though interaction with KbpA.

The catalysed reaction is L-seryl-[protein] + ATP = O-phospho-L-seryl-[protein] + ADP + H(+). It carries out the reaction L-threonyl-[protein] + ATP = O-phospho-L-threonyl-[protein] + ADP + H(+). In terms of biological role, involved in the regulation of secondary metabolism by phosphorylating, on both Ser and Thr, the AfsR global regulatory protein involved in the control of secondary metabolism. This Streptomyces coelicolor (strain ATCC BAA-471 / A3(2) / M145) protein is Serine/threonine-protein kinase AfsK (afsK).